A 425-amino-acid chain; its full sequence is Serine/threonine transporter SstT (425 aa).

9 helical membrane passes run phenylalanine 11–alanine 31, phenylalanine 43–leucine 63, leucine 91–valine 111, alanine 141–leucine 161, isoleucine 182–isoleucine 202, leucine 216–valine 236, isoleucine 290–leucine 310, leucine 316–alanine 336, and valine 363–threonine 383.

Belongs to the dicarboxylate/amino acid:cation symporter (DAACS) (TC 2.A.23) family.

It localises to the cell inner membrane. It catalyses the reaction L-serine(in) + Na(+)(in) = L-serine(out) + Na(+)(out). It carries out the reaction L-threonine(in) + Na(+)(in) = L-threonine(out) + Na(+)(out). Involved in the import of serine and threonine into the cell, with the concomitant import of sodium (symport system). The sequence is that of Serine/threonine transporter SstT from Psychromonas ingrahamii (strain DSM 17664 / CCUG 51855 / 37).